Reading from the N-terminus, the 155-residue chain is Ribosomal RNA large subunit methyltransferase H (155 aa).

S-adenosyl-L-methionine-binding positions include Leu73, Gly104, and Leu123–Leu128.

This sequence belongs to the RNA methyltransferase RlmH family. In terms of assembly, homodimer.

The protein localises to the cytoplasm. It catalyses the reaction pseudouridine(1915) in 23S rRNA + S-adenosyl-L-methionine = N(3)-methylpseudouridine(1915) in 23S rRNA + S-adenosyl-L-homocysteine + H(+). Specifically methylates the pseudouridine at position 1915 (m3Psi1915) in 23S rRNA. The chain is Ribosomal RNA large subunit methyltransferase H from Ectopseudomonas mendocina (strain ymp) (Pseudomonas mendocina).